A 274-amino-acid chain; its full sequence is MAIHLYKTSTPSTRNGAVDSQVKSNTRNNLIYGQHRCGKGRNSRGIITARHRGGGHKRLYRKIDFRRNEKYIYGRIVTIEYDPNRNAYICLIHYGDGEKRYILHPRGAIIGDTIISGTEVPIKMGNALPLTDMPLGTAIHNIEITLGRGGQLARAAGAVAKLIAKEGKSATLKLPSGEVRLISKNCSATVGQVGNAGVNQKSLGRAGSKCWLGKRPVVRGVVMNPVDHPHGGGEGRAPIGRKKPATPWGYPALGRRSRKRNKYSDNLILRRRSK.

Disordered regions lie at residues 1-21 (MAIH…VDSQ) and 224-274 (NPVD…RRSK).

It belongs to the universal ribosomal protein uL2 family. As to quaternary structure, part of the 50S ribosomal subunit.

Its subcellular location is the plastid. The protein resides in the chloroplast. This chain is Large ribosomal subunit protein uL2cz/uL2cy (rpl2-A), found in Populus trichocarpa (Western balsam poplar).